The sequence spans 201 residues: Large ribosomal subunit protein uL4 (201 aa).

The interval 46 to 71 (QKTRAEVVGSGKKPWRQKGTGRARAG) is disordered.

Belongs to the universal ribosomal protein uL4 family. As to quaternary structure, part of the 50S ribosomal subunit.

One of the primary rRNA binding proteins, this protein initially binds near the 5'-end of the 23S rRNA. It is important during the early stages of 50S assembly. It makes multiple contacts with different domains of the 23S rRNA in the assembled 50S subunit and ribosome. Its function is as follows. Forms part of the polypeptide exit tunnel. This chain is Large ribosomal subunit protein uL4, found in Shewanella woodyi (strain ATCC 51908 / MS32).